We begin with the raw amino-acid sequence, 417 residues long: Riboflavin biosynthesis protein RibBA (417 aa).

The interval 1–204 (MTRFDSIERA…IADLIAWRRK (204 aa)) is DHBP synthase. Residues 28–29 (RE), aspartate 33, 141–145 (RPGHT), and glutamate 165 contribute to the D-ribulose 5-phosphate site. Glutamate 29 contacts Mg(2+). Histidine 144 is a Mg(2+) binding site. Positions 205-417 (HEKHVERVAS…LDDFEAGEML (213 aa)) are GTP cyclohydrolase II. 259–263 (RVHSE) lines the GTP pocket. Zn(2+) is bound by residues cysteine 264, cysteine 275, and cysteine 277. GTP-binding positions include glutamine 280, 303-305 (EGR), and threonine 325. Aspartate 337 acts as the Proton acceptor; for GTP cyclohydrolase activity in catalysis. The active-site Nucleophile; for GTP cyclohydrolase activity is arginine 339. GTP contacts are provided by threonine 360 and lysine 365.

In the N-terminal section; belongs to the DHBP synthase family. The protein in the C-terminal section; belongs to the GTP cyclohydrolase II family. The cofactor is Mg(2+). Mn(2+) is required as a cofactor. Requires Zn(2+) as cofactor.

It catalyses the reaction D-ribulose 5-phosphate = (2S)-2-hydroxy-3-oxobutyl phosphate + formate + H(+). The enzyme catalyses GTP + 4 H2O = 2,5-diamino-6-hydroxy-4-(5-phosphoribosylamino)-pyrimidine + formate + 2 phosphate + 3 H(+). Its pathway is cofactor biosynthesis; riboflavin biosynthesis; 2-hydroxy-3-oxobutyl phosphate from D-ribulose 5-phosphate: step 1/1. It participates in cofactor biosynthesis; riboflavin biosynthesis; 5-amino-6-(D-ribitylamino)uracil from GTP: step 1/4. Catalyzes the conversion of D-ribulose 5-phosphate to formate and 3,4-dihydroxy-2-butanone 4-phosphate. In terms of biological role, catalyzes the conversion of GTP to 2,5-diamino-6-ribosylamino-4(3H)-pyrimidinone 5'-phosphate (DARP), formate and pyrophosphate. This Rhodococcus jostii (strain RHA1) protein is Riboflavin biosynthesis protein RibBA.